Consider the following 69-residue polypeptide: Conotoxin Eb6.19 (69 aa).

The signal sequence occupies residues 1-17 (VLIIAVLFLTACQLTTA). Residues 18–41 (ETYSRGRQKHRARRSTDKNSKWTR) constitute a propeptide that is removed on maturation. 3 cysteine pairs are disulfide-bonded: cysteine 43–cysteine 57, cysteine 50–cysteine 61, and cysteine 56–cysteine 68.

This sequence belongs to the conotoxin O1 superfamily. As to expression, expressed by the venom duct.

The protein localises to the secreted. The protein is Conotoxin Eb6.19 (E1) of Conus ebraeus (Hebrew cone).